Reading from the N-terminus, the 602-residue chain is Proteasome-associated ATPase (602 aa).

The span at 1-13 (MQHDLPGGRHDEA) shows a compositional bias: basic and acidic residues. Residues 1–33 (MQHDLPGGRHDEADSSETGGAGTTENPSSEQAR) are disordered. Over residues 23–32 (TTENPSSEQA) the composition is skewed to polar residues. Positions 28 to 103 (SSEQARQIRF…LREEVDRLAQ (76 aa)) form a coiled coil. 291–296 (GCGKTL) provides a ligand contact to ATP. The tract at residues 601–602 (YL) is docks into pockets in the proteasome alpha-ring.

The protein belongs to the AAA ATPase family. Homohexamer. Assembles into a hexameric ring structure that caps the 20S proteasome core. Strongly interacts with the prokaryotic ubiquitin-like protein Pup through a hydrophobic interface; the interacting region of ARC lies in its N-terminal coiled-coil domain. There is one Pup binding site per ARC hexamer ring. Upon ATP-binding, the C-terminus of ARC interacts with the alpha-rings of the proteasome core, possibly by binding to the intersubunit pockets.

It participates in protein degradation; proteasomal Pup-dependent pathway. Functionally, ATPase which is responsible for recognizing, binding, unfolding and translocation of pupylated proteins into the bacterial 20S proteasome core particle. May be essential for opening the gate of the 20S proteasome via an interaction with its C-terminus, thereby allowing substrate entry and access to the site of proteolysis. Thus, the C-termini of the proteasomal ATPase may function like a 'key in a lock' to induce gate opening and therefore regulate proteolysis. This chain is Proteasome-associated ATPase, found in Saccharomonospora viridis (strain ATCC 15386 / DSM 43017 / JCM 3036 / CCUG 5913 / NBRC 12207 / NCIMB 9602 / P101) (Thermoactinomyces viridis).